Here is a 409-residue protein sequence, read N- to C-terminus: Na(+)/H(+) antiporter NhaA 2 (409 aa).

The next 12 helical transmembrane spans lie at 10–30 (VAAG…NTPA), 60–80 (GLLV…FLAG), 89–109 (LVPA…YLAI), 118–138 (GWPV…AVFG), 148–168 (FLLA…AVFF), 171–191 (GLDL…AVVG), 203–223 (IAVV…TLSS), 224–244 (GIHA…LSGL), 257–277 (IVLP…IGLA), 283–303 (FWGI…AGGL), 328–348 (LLGG…FAGL), and 356–376 (TLAV…TLSI). The interval 384–409 (AGAAADDDDATRDDFPAHADGGPARA) is disordered.

Belongs to the NhaA Na(+)/H(+) (TC 2.A.33) antiporter family.

Its subcellular location is the cell membrane. It catalyses the reaction Na(+)(in) + 2 H(+)(out) = Na(+)(out) + 2 H(+)(in). Its function is as follows. Na(+)/H(+) antiporter that extrudes sodium in exchange for external protons. In Clavibacter michiganensis subsp. michiganensis (strain NCPPB 382), this protein is Na(+)/H(+) antiporter NhaA 2.